Consider the following 134-residue polypeptide: 6,7-dimethyl-8-ribityllumazine synthase (134 aa).

Residues Phe-12, 44-46 (VFD), and 68-70 (SVI) contribute to the 5-amino-6-(D-ribitylamino)uracil site. 73 to 74 (ET) is a binding site for (2S)-2-hydroxy-3-oxobutyl phosphate. The Proton donor role is filled by His-76. Leu-101 lines the 5-amino-6-(D-ribitylamino)uracil pocket. Arg-116 is a binding site for (2S)-2-hydroxy-3-oxobutyl phosphate.

The protein belongs to the DMRL synthase family.

It catalyses the reaction (2S)-2-hydroxy-3-oxobutyl phosphate + 5-amino-6-(D-ribitylamino)uracil = 6,7-dimethyl-8-(1-D-ribityl)lumazine + phosphate + 2 H2O + H(+). It participates in cofactor biosynthesis; riboflavin biosynthesis; riboflavin from 2-hydroxy-3-oxobutyl phosphate and 5-amino-6-(D-ribitylamino)uracil: step 1/2. Functionally, catalyzes the formation of 6,7-dimethyl-8-ribityllumazine by condensation of 5-amino-6-(D-ribitylamino)uracil with 3,4-dihydroxy-2-butanone 4-phosphate. This is the penultimate step in the biosynthesis of riboflavin. This chain is 6,7-dimethyl-8-ribityllumazine synthase, found in Methanosarcina mazei (strain ATCC BAA-159 / DSM 3647 / Goe1 / Go1 / JCM 11833 / OCM 88) (Methanosarcina frisia).